Consider the following 278-residue polypeptide: Tryptophan synthase alpha chain (278 aa).

Active-site proton acceptor residues include Glu-50 and Asp-61.

Belongs to the TrpA family. In terms of assembly, tetramer of two alpha and two beta chains.

It catalyses the reaction (1S,2R)-1-C-(indol-3-yl)glycerol 3-phosphate + L-serine = D-glyceraldehyde 3-phosphate + L-tryptophan + H2O. It participates in amino-acid biosynthesis; L-tryptophan biosynthesis; L-tryptophan from chorismate: step 5/5. Its function is as follows. The alpha subunit is responsible for the aldol cleavage of indoleglycerol phosphate to indole and glyceraldehyde 3-phosphate. The chain is Tryptophan synthase alpha chain from Afipia carboxidovorans (strain ATCC 49405 / DSM 1227 / KCTC 32145 / OM5) (Oligotropha carboxidovorans).